The sequence spans 438 residues: Enolase (438 aa).

Substrate is bound by residues H159 and E168. E211 (proton donor) is an active-site residue. Mg(2+) is bound by residues D246, E297, and D322. Residues E297 and D322 each coordinate substrate. The active-site Proton acceptor is K347. Substrate contacts are provided by residues 374 to 377 and K398; that span reads SHRS.

It belongs to the enolase family. In terms of assembly, homodimer. It depends on Mg(2+) as a cofactor.

Its subcellular location is the cytoplasm. It carries out the reaction (2R)-2-phosphoglycerate = phosphoenolpyruvate + H2O. Its pathway is carbohydrate degradation; glycolysis; pyruvate from D-glyceraldehyde 3-phosphate: step 4/5. The chain is Enolase (emp-7) from Neurospora crassa (strain ATCC 24698 / 74-OR23-1A / CBS 708.71 / DSM 1257 / FGSC 987).